The following is a 529-amino-acid chain: Beta-glucosidase 11 (529 aa).

An N-terminal signal peptide occupies residues 1-25; sequence MAVAGAMVMSGALLLLHLLAFTCVA. Residues Gln-54, His-157, and 202–203 each bind a beta-D-glucoside; that span reads NE. The Proton donor role is filled by Glu-203. Cysteines 222 and 230 form a disulfide. Tyr-346 is an a beta-D-glucoside binding site. Asn-361 carries an N-linked (GlcNAc...) asparagine glycan. Glu-417 provides a ligand contact to a beta-D-glucoside. The active-site Nucleophile is Glu-417. An N-linked (GlcNAc...) asparagine glycan is attached at Asn-425. Residues Trp-466, 473-474, and Phe-482 contribute to the a beta-D-glucoside site; that span reads EW.

The protein belongs to the glycosyl hydrolase 1 family.

It catalyses the reaction Hydrolysis of terminal, non-reducing beta-D-glucosyl residues with release of beta-D-glucose.. The protein is Beta-glucosidase 11 (BGLU11) of Oryza sativa subsp. japonica (Rice).